Reading from the N-terminus, the 240-residue chain is Phosphoribosylaminoimidazole-succinocarboxamide synthase (240 aa).

This sequence belongs to the SAICAR synthetase family.

It catalyses the reaction 5-amino-1-(5-phospho-D-ribosyl)imidazole-4-carboxylate + L-aspartate + ATP = (2S)-2-[5-amino-1-(5-phospho-beta-D-ribosyl)imidazole-4-carboxamido]succinate + ADP + phosphate + 2 H(+). It participates in purine metabolism; IMP biosynthesis via de novo pathway; 5-amino-1-(5-phospho-D-ribosyl)imidazole-4-carboxamide from 5-amino-1-(5-phospho-D-ribosyl)imidazole-4-carboxylate: step 1/2. This chain is Phosphoribosylaminoimidazole-succinocarboxamide synthase, found in Acidithiobacillus ferrooxidans (strain ATCC 23270 / DSM 14882 / CIP 104768 / NCIMB 8455) (Ferrobacillus ferrooxidans (strain ATCC 23270)).